We begin with the raw amino-acid sequence, 144 residues long: MAFDKLGRFFGIAEDDEMNEAPYTEAEQQEEEVPQAQKNERRANVVSINSGVGATSKIVLYEPRVYSDAKEVAQNLLNNKAVIINFARMDDEQARRIVDFITGTVYALNGEIQRVGDKIFLATPPKFETDGKIAELVEKKDKMD.

A disordered region spans residues 16-42; that stretch reads DEMNEAPYTEAEQQEEEVPQAQKNERR.

It belongs to the SepF family. As to quaternary structure, homodimer. Interacts with FtsZ.

It localises to the cytoplasm. Functionally, cell division protein that is part of the divisome complex and is recruited early to the Z-ring. Probably stimulates Z-ring formation, perhaps through the cross-linking of FtsZ protofilaments. Its function overlaps with FtsA. In Lactobacillus gasseri (strain ATCC 33323 / DSM 20243 / BCRC 14619 / CIP 102991 / JCM 1131 / KCTC 3163 / NCIMB 11718 / NCTC 13722 / AM63), this protein is Cell division protein SepF.